The primary structure comprises 185 residues: Elongation factor P (185 aa).

The protein belongs to the elongation factor P family.

Its subcellular location is the cytoplasm. Its pathway is protein biosynthesis; polypeptide chain elongation. In terms of biological role, involved in peptide bond synthesis. Stimulates efficient translation and peptide-bond synthesis on native or reconstituted 70S ribosomes in vitro. Probably functions indirectly by altering the affinity of the ribosome for aminoacyl-tRNA, thus increasing their reactivity as acceptors for peptidyl transferase. This is Elongation factor P from Moorella thermoacetica (strain ATCC 39073 / JCM 9320).